The sequence spans 276 residues: MATTTAAAASGIFGIRIQDPRPGTGRVQARFGFSFGKKKPAPPPKKSRQVQDDGDRLVWFPGANPPEWLDGSMIGDRGFDPFGLGKPAEYLQYDFDGLDQNLAKNVAGDIIGIIQESSEIKPTPFQPYTEVFGIQRFRECELIHGRWAMLGTLGAIAVEALTGIAWQDAGKVELVEGSSYLGQPLPFSLTTLIWIEVLVVGYIEFQRNSELDPEKRIYPGGYFDPLGLAADPEKLDTLKLAEIKHSRLAMVAFLIFALQAAFTGKGPVSFLATFNN.

The transit peptide at 1–29 directs the protein to the chloroplast; that stretch reads MATTTAAAASGIFGIRIQDPRPGTGRVQA. Residues 1–53 are disordered; it reads MATTTAAAASGIFGIRIQDPRPGTGRVQARFGFSFGKKKPAPPPKKSRQVQDD. The segment covering 36-48 has biased composition (basic residues); that stretch reads GKKKPAPPPKKSR. Trp-59 is a chlorophyll b binding site. Positions 79, 141, and 144 each coordinate chlorophyll a. Residues 147-167 form a helical membrane-spanning segment; the sequence is WAMLGTLGAIAVEALTGIAWQ. Leu-181 lines the chlorophyll a pocket. Residues 185–205 form a helical membrane-spanning segment; that stretch reads LPFSLTTLIWIEVLVVGYIEF. 2 residues coordinate chlorophyll b: Glu-204 and Arg-207. Positions 242, 245, 247, and 259 each coordinate chlorophyll a. The chain crosses the membrane as a helical span at residues 248 to 268; that stretch reads LAMVAFLIFALQAAFTGKGPV.

Belongs to the light-harvesting chlorophyll a/b-binding (LHC) protein family. The LHC complex consists of chlorophyll a-b binding proteins. Binds at least 14 chlorophylls (8 Chl-a and 6 Chl-b) and carotenoids such as lutein and neoxanthin. is required as a cofactor. Photoregulated by reversible phosphorylation of its threonine residues.

It is found in the plastid. The protein localises to the chloroplast thylakoid membrane. In terms of biological role, the light-harvesting complex (LHC) functions as a light receptor, it captures and delivers excitation energy to photosystems with which it is closely associated. The protein is Chlorophyll a-b binding protein CP29.3, chloroplastic (LHCB4.3) of Arabidopsis thaliana (Mouse-ear cress).